The sequence spans 311 residues: tRNA-cytidine(32) 2-sulfurtransferase (311 aa).

Residues 47 to 52 (SGGKDS) carry the PP-loop motif motif. Residues C122, C125, and C213 each coordinate [4Fe-4S] cluster.

The protein belongs to the TtcA family. As to quaternary structure, homodimer. The cofactor is Mg(2+). [4Fe-4S] cluster is required as a cofactor.

The protein resides in the cytoplasm. It carries out the reaction cytidine(32) in tRNA + S-sulfanyl-L-cysteinyl-[cysteine desulfurase] + AH2 + ATP = 2-thiocytidine(32) in tRNA + L-cysteinyl-[cysteine desulfurase] + A + AMP + diphosphate + H(+). The protein operates within tRNA modification. Catalyzes the ATP-dependent 2-thiolation of cytidine in position 32 of tRNA, to form 2-thiocytidine (s(2)C32). The sulfur atoms are provided by the cysteine/cysteine desulfurase (IscS) system. This is tRNA-cytidine(32) 2-sulfurtransferase from Escherichia fergusonii (strain ATCC 35469 / DSM 13698 / CCUG 18766 / IAM 14443 / JCM 21226 / LMG 7866 / NBRC 102419 / NCTC 12128 / CDC 0568-73).